The chain runs to 151 residues: Nucleoside diphosphate kinase (151 aa).

ATP-binding residues include K11, F59, R87, T93, R104, and N114. H117 (pros-phosphohistidine intermediate) is an active-site residue.

The protein belongs to the NDK family. In terms of assembly, homotetramer. The cofactor is Mg(2+).

It localises to the cytoplasm. It catalyses the reaction a 2'-deoxyribonucleoside 5'-diphosphate + ATP = a 2'-deoxyribonucleoside 5'-triphosphate + ADP. The catalysed reaction is a ribonucleoside 5'-diphosphate + ATP = a ribonucleoside 5'-triphosphate + ADP. In terms of biological role, major role in the synthesis of nucleoside triphosphates other than ATP. The ATP gamma phosphate is transferred to the NDP beta phosphate via a ping-pong mechanism, using a phosphorylated active-site intermediate. This Prochlorococcus marinus (strain SARG / CCMP1375 / SS120) protein is Nucleoside diphosphate kinase.